We begin with the raw amino-acid sequence, 210 residues long: Somatotropin-1 (210 aa).

An N-terminal signal peptide occupies residues 1–22 (MGQVFLLMPVLLASCFLSQGAA). His38 contacts Zn(2+). A disulfide bridge connects residues Cys71 and Cys183. Glu192 contacts Zn(2+). A disulfide bridge links Cys200 with Cys208.

Belongs to the somatotropin/prolactin family.

The protein resides in the secreted. Functionally, growth hormone plays an important role in growth control and is involved in the regulation of several anabolic processes. Implicated as an osmoregulatory substance important for seawater adaptation. This Oncorhynchus nerka (Sockeye salmon) protein is Somatotropin-1 (gh1).